Here is a 118-residue protein sequence, read N- to C-terminus: Large ribosomal subunit protein uL18 (118 aa).

It belongs to the universal ribosomal protein uL18 family. In terms of assembly, part of the 50S ribosomal subunit; part of the 5S rRNA/L5/L18/L25 subcomplex. Contacts the 5S and 23S rRNAs.

In terms of biological role, this is one of the proteins that bind and probably mediate the attachment of the 5S RNA into the large ribosomal subunit, where it forms part of the central protuberance. The protein is Large ribosomal subunit protein uL18 of Campylobacter jejuni subsp. doylei (strain ATCC BAA-1458 / RM4099 / 269.97).